The following is a 299-amino-acid chain: UDP-N-acetylenolpyruvoylglucosamine reductase (299 aa).

One can recognise an FAD-binding PCMH-type domain in the interval 28–193 (KVGGPADILA…LSAKFELQAG (166 aa)). Residue Arg-172 is part of the active site. Ser-222 functions as the Proton donor in the catalytic mechanism. Residue Glu-292 is part of the active site.

FAD is required as a cofactor.

It localises to the cytoplasm. The catalysed reaction is UDP-N-acetyl-alpha-D-muramate + NADP(+) = UDP-N-acetyl-3-O-(1-carboxyvinyl)-alpha-D-glucosamine + NADPH + H(+). It participates in cell wall biogenesis; peptidoglycan biosynthesis. Its function is as follows. Cell wall formation. The chain is UDP-N-acetylenolpyruvoylglucosamine reductase from Lactococcus lactis subsp. cremoris (strain MG1363).